The sequence spans 142 residues: 3-hydroxyacyl-[acyl-carrier-protein] dehydratase FabZ (142 aa).

Histidine 49 is an active-site residue.

It belongs to the thioester dehydratase family. FabZ subfamily.

It localises to the cytoplasm. It catalyses the reaction a (3R)-hydroxyacyl-[ACP] = a (2E)-enoyl-[ACP] + H2O. Its function is as follows. Involved in unsaturated fatty acids biosynthesis. Catalyzes the dehydration of short chain beta-hydroxyacyl-ACPs and long chain saturated and unsaturated beta-hydroxyacyl-ACPs. This is 3-hydroxyacyl-[acyl-carrier-protein] dehydratase FabZ from Clostridium novyi (strain NT).